We begin with the raw amino-acid sequence, 473 residues long: Photosystem II CP43 reaction center protein (473 aa).

Residues 1–14 constitute a propeptide that is removed on maturation; that stretch reads MKTLYSLRRFYHVE. Residue threonine 15 is modified to N-acetylthreonine. The residue at position 15 (threonine 15) is a Phosphothreonine. The next 5 helical transmembrane spans lie at 69–93, 134–155, 178–200, 255–275, and 291–312; these read LFEVAHFVPEKPMYEQGLILLPHLA, LLGPETLEESFPFFGYVWKDRN, KALFFGGIYDTWAPGGGDVRKIT, KPFAWARRALVWSGEAYLSYS, and WFNNTAYPSEFYGPTGPEASQA. Residue glutamate 367 coordinates [CaMn4O5] cluster. Residues 447–471 traverse the membrane as a helical segment; that stretch reads RARAAAAGFEKGIDRDFEPVLSMTP.

The protein belongs to the PsbB/PsbC family. PsbC subfamily. As to quaternary structure, PSII is composed of 1 copy each of membrane proteins PsbA, PsbB, PsbC, PsbD, PsbE, PsbF, PsbH, PsbI, PsbJ, PsbK, PsbL, PsbM, PsbT, PsbX, PsbY, PsbZ, Psb30/Ycf12, at least 3 peripheral proteins of the oxygen-evolving complex and a large number of cofactors. It forms dimeric complexes. Binds multiple chlorophylls and provides some of the ligands for the Ca-4Mn-5O cluster of the oxygen-evolving complex. It may also provide a ligand for a Cl- that is required for oxygen evolution. PSII binds additional chlorophylls, carotenoids and specific lipids. serves as cofactor.

It localises to the plastid. Its subcellular location is the chloroplast thylakoid membrane. Functionally, one of the components of the core complex of photosystem II (PSII). It binds chlorophyll and helps catalyze the primary light-induced photochemical processes of PSII. PSII is a light-driven water:plastoquinone oxidoreductase, using light energy to abstract electrons from H(2)O, generating O(2) and a proton gradient subsequently used for ATP formation. The chain is Photosystem II CP43 reaction center protein from Fagopyrum esculentum subsp. ancestrale (Wild buckwheat).